We begin with the raw amino-acid sequence, 243 residues long: 2-C-methyl-D-erythritol 4-phosphate cytidylyltransferase (243 aa).

The protein belongs to the IspD/TarI cytidylyltransferase family. IspD subfamily.

It carries out the reaction 2-C-methyl-D-erythritol 4-phosphate + CTP + H(+) = 4-CDP-2-C-methyl-D-erythritol + diphosphate. Its pathway is isoprenoid biosynthesis; isopentenyl diphosphate biosynthesis via DXP pathway; isopentenyl diphosphate from 1-deoxy-D-xylulose 5-phosphate: step 2/6. Functionally, catalyzes the formation of 4-diphosphocytidyl-2-C-methyl-D-erythritol from CTP and 2-C-methyl-D-erythritol 4-phosphate (MEP). This is 2-C-methyl-D-erythritol 4-phosphate cytidylyltransferase from Chlorobium phaeovibrioides (strain DSM 265 / 1930) (Prosthecochloris vibrioformis (strain DSM 265)).